Reading from the N-terminus, the 338-residue chain is Nicotinate-nucleotide--dimethylbenzimidazole phosphoribosyltransferase (338 aa).

The active-site Proton acceptor is glutamate 306.

The protein belongs to the CobT family.

It carries out the reaction 5,6-dimethylbenzimidazole + nicotinate beta-D-ribonucleotide = alpha-ribazole 5'-phosphate + nicotinate + H(+). It participates in nucleoside biosynthesis; alpha-ribazole biosynthesis; alpha-ribazole from 5,6-dimethylbenzimidazole: step 1/2. Its function is as follows. Catalyzes the synthesis of alpha-ribazole-5'-phosphate from nicotinate mononucleotide (NAMN) and 5,6-dimethylbenzimidazole (DMB). In Cereibacter sphaeroides (strain ATCC 17023 / DSM 158 / JCM 6121 / CCUG 31486 / LMG 2827 / NBRC 12203 / NCIMB 8253 / ATH 2.4.1.) (Rhodobacter sphaeroides), this protein is Nicotinate-nucleotide--dimethylbenzimidazole phosphoribosyltransferase.